The sequence spans 786 residues: Kazrin-A (786 aa).

The disordered stretch occupies residues 44-70 (EEPGEPQEHQQQQQQQNHQDAPVQRQK). The segment covering 52–62 (HQQQQQQQNHQ) has biased composition (low complexity). Positions 92 to 270 (LLHEEVLRLQ…SLATLTKDVP (179 aa)) form a coiled coil. The disordered stretch occupies residues 350–425 (MSDASVMEGE…LFDDSDSLSS (76 aa)). 3 consecutive SAM domains span residues 457 to 522 (WRAG…YRDA), 535 to 599 (DHHW…LHTL), and 623 to 686 (WTCQ…SEEM). The tract at residues 703 to 760 (PLGTPPTLHRQSSLSSSSPSCHDDQQSLRRVKQQLGLSPKNLTARNISHQSRSGSFPR) is disordered. Residues 742–758 (KNLTARNISHQSRSGSF) show a composition bias toward polar residues.

The protein belongs to the kazrin family.

This is Kazrin-A (kazna) from Danio rerio (Zebrafish).